A 577-amino-acid polypeptide reads, in one-letter code: Arginine--tRNA ligase (577 aa).

A 'HIGH' region motif is present at residues 122 to 132; that stretch reads PNVAKEMHVGH.

This sequence belongs to the class-I aminoacyl-tRNA synthetase family. In terms of assembly, monomer.

It is found in the cytoplasm. The catalysed reaction is tRNA(Arg) + L-arginine + ATP = L-arginyl-tRNA(Arg) + AMP + diphosphate. This is Arginine--tRNA ligase from Histophilus somni (strain 129Pt) (Haemophilus somnus).